The sequence spans 331 residues: Protein RecA (331 aa).

66-73 (GPESSGKT) contributes to the ATP binding site.

It belongs to the RecA family.

It localises to the cytoplasm. In terms of biological role, can catalyze the hydrolysis of ATP in the presence of single-stranded DNA, the ATP-dependent uptake of single-stranded DNA by duplex DNA, and the ATP-dependent hybridization of homologous single-stranded DNAs. It interacts with LexA causing its activation and leading to its autocatalytic cleavage. The polypeptide is Protein RecA (Acholeplasma laidlawii).